The chain runs to 783 residues: Galactinol--sucrose galactosyltransferase (783 aa).

The protein belongs to the glycosyl hydrolases 36 family.

The enzyme catalyses alpha-D-galactosyl-(1-&gt;3)-1D-myo-inositol + sucrose = raffinose + myo-inositol. Its activity is regulated as follows. Inhibited by Ag(2)+, Hg(2+), Zn(2+), p-chloromercuribenzoate (pCMB) and 1-deoxygalactonojirimycin. Functionally, transglycosidase operating by a ping-pong reaction mechanism. Involved in the synthesis of raffinose, a major soluble carbohydrate in seeds, roots and tubers. Specific for galactinol and p-nitrophenyl-alpha-D-galactoside as galactosyl donors. Able to utilize sucrose, lactose, 4-beta-galactobiose, N-acetyl-D-lactosamine, trehalose and lacto-N-biose as acceptors. May also act as a glycoside hydrolase. The chain is Galactinol--sucrose galactosyltransferase (RFS) from Oryza sativa subsp. japonica (Rice).